We begin with the raw amino-acid sequence, 663 residues long: Oxytetracycline resistance protein (663 aa).

Residues 1–252 form the tr-type G domain; it reads MNKLNLGILA…GIRELLPSVH (252 aa). GTP contacts are provided by residues 10–17, 74–78, and 128–131; these read AHVDAGKT, DTPGH, and NKID.

Belongs to the TRAFAC class translation factor GTPase superfamily. Classic translation factor GTPase family. TetM/TetO subfamily.

Abolishes the inhibitory effect of oxytetracycline on protein synthesis by a non-covalent modification of the ribosomes. The chain is Oxytetracycline resistance protein (otrA) from Streptomyces rimosus.